An 806-amino-acid chain; its full sequence is MTSIELLSPLIHDKFRFSTCCSTSSLLYLHASSFFRDRSFGFRQNPNRFVSNSSIQLPQSVPGSINQERFNLWQGFSRKKSTSSSRTIVNCQEGDQKASSSEGEGKTNKDKGRKQGKNELWWSKGKKWQWKPIIQAQEIGVMLLQLGIVMFVVRLLRPGIPLPGSEPRTQTTFMSVPYSDFLSKVNNDEVQKVEVDGFHVLFKLKDDGNLQESETSSSSIKLSESSETMLRSVAPTKRVVYSTTRPRDIKTPYEKMLENNVEFGSPDKRSGGFFNSGLIVLFYIAVLAGLLHRFPVNFSQSTTGQLRTRKSGGPGGGKVSGDGETITFADVAGVDEAKEELEEIVEFLKNPDRYVRLGARPPRGVLLVGLPGTGKTLLAKAVAGESDVPFISCSASEFVELYVGMGASRVRDLFARAKKEAPSIIFIDEIDAVAKSRDGKFRMVSNDEREQTLNQLLTEMDGFDSSSAVIVLGATNRADVLDPALRRPGRFDRVVTVESPDKVGRESILKVHVSKKELPLGDDVNLASIASMTTGFTGADLANLVNEAALLAGRKSKMTVDKIDFIHAVERSIAGIEKKTARLKGSEKAVVARHEAGHAVVGTAVASLLSGQSRVEKLSILPRSGGALGFTYIPPTHEDRYLLFIDELHGRLVTLLGGRAAEEVVYSGRISTGALDDIRRATDMAYKAVAEYGLNEKIGPVSVATLSAGGIDDSGGSPWGRDQGHLVDLVQREVTNLLQSALDVALTVVRANPDVLEGLGAQLEDEEKVEGEELQKWLNRVVPSEELAVFIKGKQTALLPAQASSS.

Residues 1–62 (MTSIELLSPL…SSIQLPQSVP (62 aa)) constitute a chloroplast transit peptide. The interval 84 to 116 (SSRTIVNCQEGDQKASSSEGEGKTNKDKGRKQG) is disordered. 2 helical membrane-spanning segments follow: residues 133–153 (IIQA…MFVV) and 271–291 (GGFF…AGLL). 369–376 (GLPGTGKT) contributes to the ATP binding site. H594 serves as a coordination point for Zn(2+). E595 is an active-site residue. The Zn(2+) site is built by H598 and D677.

The protein in the N-terminal section; belongs to the AAA ATPase family. This sequence in the C-terminal section; belongs to the peptidase M41 family. The cofactor is Zn(2+).

It localises to the plastid. The protein localises to the chloroplast thylakoid membrane. Functionally, probable ATP-dependent zinc metallopeptidase. The chain is ATP-dependent zinc metalloprotease FTSH 9, chloroplastic (FTSH9) from Arabidopsis thaliana (Mouse-ear cress).